Reading from the N-terminus, the 541-residue chain is Transmembrane protein 87A (541 aa).

The N-terminal stretch at 1–26 is a signal peptide; the sequence is MAAASFQPLKCLLLWVFFVITPPVKA. At 27 to 209 the chain is on the lumenal side; it reads VPEPGIWTVP…HGFISASDWP (183 aa). N-linked (GlcNAc...) asparagine glycans are attached at residues asparagine 52, asparagine 109, asparagine 148, and asparagine 189. Disulfide bonds link cysteine 65–cysteine 116 and cysteine 82–cysteine 416. Residues 210–230 traverse the membrane as a helical segment; it reads LMIFYMVMCIMYILLALLWFI. The Cytoplasmic portion of the chain corresponds to 231 to 241; that stretch reads WSACYWKDLLR. A helical transmembrane segment spans residues 242 to 262; that stretch reads IQFWIAAVIFLGMLEKAVYYA. The Lumenal segment spans residues 263 to 293; it reads EYQNTDNTGVSSHGLLIFAELISSIKRTLAR. Residues 294–314 traverse the membrane as a helical segment; the sequence is LLVTIVSLGYGIIKPRLGAVM. Residues 315–316 are Cytoplasmic-facing; that stretch reads HR. A helical membrane pass occupies residues 317-337; that stretch reads VVGMGVLYFVFAAVEGVMRII. Topologically, residues 338-344 are lumenal; the sequence is GAKEYDL. The helical transmembrane segment at 345 to 365 threads the bilayer; it reads VLLAGIPLALLDSGLCWWIFV. Over 366-384 the chain is Cytoplasmic; sequence SLAQTMKTLKLRKNTVKYS. The chain crosses the membrane as a helical span at residues 385–405; the sequence is LYRHFTNTLIFAILASIIFMI. Over 406 to 422 the chain is Lumenal; sequence WRTKKFQLVDCQADWME. The chain crosses the membrane as a helical span at residues 423–443; that stretch reads LWVDDAYWRFLFFIILLVIMF. Residues 444 to 541 are Cytoplasmic-facing; that stretch reads LWRPSANNQR…MTKYEMSKIE (98 aa).

Belongs to the LU7TM family. TMEM87 subfamily.

The protein localises to the cell membrane. It is found in the golgi apparatus membrane. Its function is as follows. Potential monoatomic ion channel gated by mechanical force, implicated in normal touch sensitivity through the generation of mechanically activated currents. However, a direct channel activity is debated and an alternative could be that it functions as a chaperone for an unidentified mechanosensitive ion channel. Could also be involved in cell mechanosensitivity regulating cell adhesion and migration. May also be involved in retrograde transport from endosomes to the trans-Golgi network (TGN). The polypeptide is Transmembrane protein 87A (Xenopus tropicalis (Western clawed frog)).